A 548-amino-acid polypeptide reads, in one-letter code: DNA-binding protein REPIN1 (548 aa).

Positions 1–47 are disordered; it reads MLERRCRGPTAMGPAHPWLFSGPSQESSQPNRGLRYQGKSVAQPGGP. Residues 22–31 are compositionally biased toward polar residues; sequence GPSQESSQPN. Ser-27 bears the Phosphoserine mark. Position 39 is an N6-acetyllysine (Lys-39). Residues 53-75 form a C2H2-type 1; atypical zinc finger; it reads HRCAHCRKRFPGWVALWLHTRRC. 2 consecutive C2H2-type zinc fingers follow at residues 81–103 and 112–134; these read LPCHECNQRFRHAPFLALHLQVH and FICHLCGHSFRGWVALVLHLRAH. The C2H2-type 4; atypical zinc-finger motif lies at 141-163; the sequence is ITCPECNKRFWRQKQLRAHLRRC. 11 consecutive C2H2-type zinc fingers follow at residues 173-195, 232-254, 260-282, 288-310, 356-378, 384-406, 412-434, 440-462, 468-490, 496-518, and 524-546; these read FICGNCGRSFAQWDQLVVHKRVH, FQCACCGKRFRHKPNLIAHRRVH, HQCPECGKRFTNKPYLTSHRRIH, YPCTECGRRFRHKPNLLSHSKIH, HSCTDCGRSFRLERFLRLHQRQH, FTCTECGKNFGKKTHLVAHSRVH, FACEECGRRFSQGSHLAAHRRDH, FVCPDCGKAFRHKPYLAAHRRIH, YVCPDCGKAFSQKSNLVSHRRIH, YACPDCDRSFSQKSNLITHRKSH, and FCCAICGQTFDDEDRLLMHQKKH. Lys-272 carries the post-translational modification N6-acetyllysine.

In terms of assembly, homodimers and homomultimers. Found in a complex with RIP60 and RIP100. In terms of tissue distribution, expressed in the liver and in subcutaneous and visceral adipose tissue.

It localises to the nucleus. Its subcellular location is the cytoplasm. The protein resides in the cytosol. Sequence-specific double-stranded DNA-binding protein. Binds ATT-rich and T-rich DNA sequences and facilitates DNA bending. May regulate the expression of genes involved in cellular fatty acid import, including SCARB1/CD36, and genes involved in lipid droplet formation. May regulate the expression of LCN2, and thereby influence iron metabolism and apoptosis-related pathways. May regulate the expression of genes involved in glucose transport. The polypeptide is DNA-binding protein REPIN1 (Repin1) (Rattus norvegicus (Rat)).